Reading from the N-terminus, the 158-residue chain is Transcription elongation factor GreA (158 aa).

Residues 24 to 43 are compositionally biased toward basic and acidic residues; the sequence is DVERPKASEAIGEARDKGDL. The disordered stretch occupies residues 24–47; the sequence is DVERPKASEAIGEARDKGDLSENA. Residues 48–68 are a coiled coil; the sequence is EYDAAKEAQGLLEMKISKMEE.

The protein belongs to the GreA/GreB family.

Necessary for efficient RNA polymerase transcription elongation past template-encoded arresting sites. The arresting sites in DNA have the property of trapping a certain fraction of elongating RNA polymerases that pass through, resulting in locked ternary complexes. Cleavage of the nascent transcript by cleavage factors such as GreA or GreB allows the resumption of elongation from the new 3'terminus. GreA releases sequences of 2 to 3 nucleotides. The chain is Transcription elongation factor GreA from Christiangramia forsetii (strain DSM 17595 / CGMCC 1.15422 / KT0803) (Gramella forsetii).